The primary structure comprises 347 residues: NADH-ubiquinone oxidoreductase chain 2 (347 aa).

Helical transmembrane passes span 3–23 (PPIL…VMTS), 25–45 (HWML…PILM), 59–79 (YFLT…INLL), 96–116 (ILMT…FWVP), 122–142 (ISLS…LSVL), 149–169 (INPN…GWGG), 178–198 (IMAY…LYNP), 201–221 (MFLN…LFMI), 237–257 (APLI…LPPL), 274–294 (EMII…YFYM), and 323–343 (MIFL…TPMI).

This sequence belongs to the complex I subunit 2 family. In terms of assembly, core subunit of respiratory chain NADH dehydrogenase (Complex I) which is composed of 45 different subunits. Interacts with TMEM242.

The protein resides in the mitochondrion inner membrane. The enzyme catalyses a ubiquinone + NADH + 5 H(+)(in) = a ubiquinol + NAD(+) + 4 H(+)(out). Functionally, core subunit of the mitochondrial membrane respiratory chain NADH dehydrogenase (Complex I) which catalyzes electron transfer from NADH through the respiratory chain, using ubiquinone as an electron acceptor. Essential for the catalytic activity and assembly of complex I. This chain is NADH-ubiquinone oxidoreductase chain 2, found in Civettictis civetta (African civet).